The primary structure comprises 1375 residues: DNA-directed RNA polymerase subunit beta (1375 aa).

Belongs to the RNA polymerase beta chain family. As to quaternary structure, the RNAP catalytic core consists of 2 alpha, 1 beta, 1 beta' and 1 omega subunit. When a sigma factor is associated with the core the holoenzyme is formed, which can initiate transcription.

It carries out the reaction RNA(n) + a ribonucleoside 5'-triphosphate = RNA(n+1) + diphosphate. DNA-dependent RNA polymerase catalyzes the transcription of DNA into RNA using the four ribonucleoside triphosphates as substrates. This is DNA-directed RNA polymerase subunit beta from Coxiella burnetii (strain Dugway 5J108-111).